The sequence spans 392 residues: MPEGFQSLNQTLPSAISSIAHLESLNDSFILGAKQSEDVSPGLEILALISVTYAVIISVGILGNTILIKVFFKIKSMQTVPNIFITSLAFGDLLLLLTCVPVDASRYIVDTWMFGRAGCKIISFIQLTSVGVSVFTLTVLSADRYRAIVKPLQLQTSDAVLKTCGKAVCVWIISMLLAAPEAVFSDLYEFGSSEKNTTFEACAPYPVSEKILQETHSLICFLVFYIVPLSIISAYYFLIAKTLYKSTFNMPAEEHTHARKQIESRKRVAKTVLVLVALFAVCWLPNHMLYLYRSFTYHSAVNSSAFHLSATIFARVLAFSNSCVNPFALYWLSRSFRQHFKKQVYCCKTEPPASQQSPTHSSTITGITAVKGNIQMSEISITLLSAYDVKKE.

Over 1-40 (MPEGFQSLNQTLPSAISSIAHLESLNDSFILGAKQSEDVS) the chain is Extracellular. Residues N9 and N26 are each glycosylated (N-linked (GlcNAc...) asparagine). A helical transmembrane segment spans residues 41–62 (PGLEILALISVTYAVIISVGIL). At 63 to 81 (GNTILIKVFFKIKSMQTVP) the chain is on the cytoplasmic side. A helical membrane pass occupies residues 82-102 (NIFITSLAFGDLLLLLTCVPV). Residues 103–120 (DASRYIVDTWMFGRAGCK) lie on the Extracellular side of the membrane. The cysteines at positions 119 and 202 are disulfide-linked. The helical transmembrane segment at 121 to 142 (IISFIQLTSVGVSVFTLTVLSA) threads the bilayer. The Cytoplasmic segment spans residues 143-162 (DRYRAIVKPLQLQTSDAVLK). A helical membrane pass occupies residues 163 to 183 (TCGKAVCVWIISMLLAAPEAV). Over 184 to 219 (FSDLYEFGSSEKNTTFEACAPYPVSEKILQETHSLI) the chain is Extracellular. The helical transmembrane segment at 220–240 (CFLVFYIVPLSIISAYYFLIA) threads the bilayer. Residues 241 to 271 (KTLYKSTFNMPAEEHTHARKQIESRKRVAKT) lie on the Cytoplasmic side of the membrane. The chain crosses the membrane as a helical span at residues 272-292 (VLVLVALFAVCWLPNHMLYLY). Residues 293 to 312 (RSFTYHSAVNSSAFHLSATI) are Extracellular-facing. The helical transmembrane segment at 313-332 (FARVLAFSNSCVNPFALYWL) threads the bilayer. At 333–392 (SRSFRQHFKKQVYCCKTEPPASQQSPTHSSTITGITAVKGNIQMSEISITLLSAYDVKKE) the chain is on the cytoplasmic side. C346 carries the S-palmitoyl cysteine lipid modification.

The protein belongs to the G-protein coupled receptor 1 family. In terms of tissue distribution, expressed only in brain, primarily in cortex and forebrain and at low levels in the midbrain.

It is found in the cell membrane. In terms of biological role, the relative rank potency of bombesin-like peptides for this receptor is [Phe13]bombesin &gt; [Leu13]bombesin &gt; GRP &gt; neuromedin-B. The sequence is that of [Phe13]-bombesin receptor (BB4) from Bombina orientalis (Oriental fire-bellied toad).